The following is a 1160-amino-acid chain: Transcription factor tau 138 kDa subunit (1160 aa).

Residues 475–533 (PNSKKTPNKNKRKRQVKNSTNASVAGNISNPKRIKLEQHVSTAQEPKSAEDSPSSNGGT) are disordered. Residues 480–490 (TPNKNKRKRQV) are compositionally biased toward basic residues. Polar residues-rich tracts occupy residues 491–504 (KNSTNASVAGNISN) and 513–529 (HVSTAQEPKSAEDSPSS). Phosphoserine is present on serine 546.

Component of the TFIIIC complex composed of TFC1, TFC3, TFC4, TFC6, TFC7 and TFC8. The subunits are organized in two globular domains, tauA and tauB, connected by a proteolysis-sensitive and flexible linker. Interacts with TFC1, TFC4 and TFC6.

It localises to the nucleus. The protein localises to the mitochondrion. TFIIIC mediates tRNA and 5S RNA gene activation by binding to intragenic promoter elements. Upstream of the transcription start site, TFIIIC assembles the initiation complex TFIIIB-TFIIIC-tDNA, which is sufficient for RNA polymerase III recruitment and function. Part of the tauB domain of TFIIIC that binds boxB DNA promoter sites of tRNA and similar genes. TFC3 is essential for cell viability. Cooperates with TFC6 in DNA binding. The polypeptide is Transcription factor tau 138 kDa subunit (TFC3) (Saccharomyces cerevisiae (strain ATCC 204508 / S288c) (Baker's yeast)).